Here is a 123-residue protein sequence, read N- to C-terminus: Small ribosomal subunit protein uS12 (123 aa).

Residue D89 is modified to 3-methylthioaspartic acid. A disordered region spans residues 100-123; sequence GSLDTSGVSDRKQGRSKYGTKRPK. A compositionally biased stretch (basic residues) spans 113-123; sequence GRSKYGTKRPK.

The protein belongs to the universal ribosomal protein uS12 family. Part of the 30S ribosomal subunit. Contacts proteins S8 and S17. May interact with IF1 in the 30S initiation complex.

In terms of biological role, with S4 and S5 plays an important role in translational accuracy. Its function is as follows. Interacts with and stabilizes bases of the 16S rRNA that are involved in tRNA selection in the A site and with the mRNA backbone. Located at the interface of the 30S and 50S subunits, it traverses the body of the 30S subunit contacting proteins on the other side and probably holding the rRNA structure together. The combined cluster of proteins S8, S12 and S17 appears to hold together the shoulder and platform of the 30S subunit. The polypeptide is Small ribosomal subunit protein uS12 (Saccharophagus degradans (strain 2-40 / ATCC 43961 / DSM 17024)).